Reading from the N-terminus, the 539-residue chain is Phosphoenolpyruvate carboxykinase (ATP) (539 aa).

Substrate is bound by residues R64, Y206, and K212. Residues K212, H231, and 247-255 each bind ATP; that span reads GLSGTGKTT. Residues K212 and H231 each contribute to the Mn(2+) site. D268 contacts Mn(2+). Residues E296, R332, 448-449, and T454 contribute to the ATP site; that span reads RI. R332 lines the substrate pocket.

This sequence belongs to the phosphoenolpyruvate carboxykinase (ATP) family. In terms of assembly, monomer. It depends on Mn(2+) as a cofactor.

The protein resides in the cytoplasm. The enzyme catalyses oxaloacetate + ATP = phosphoenolpyruvate + ADP + CO2. Its pathway is carbohydrate biosynthesis; gluconeogenesis. Functionally, involved in the gluconeogenesis. Catalyzes the conversion of oxaloacetate (OAA) to phosphoenolpyruvate (PEP) through direct phosphoryl transfer between the nucleoside triphosphate and OAA. This chain is Phosphoenolpyruvate carboxykinase (ATP), found in Sodalis glossinidius (strain morsitans).